The primary structure comprises 316 residues: MDILPHEKQIHEYIKTIEHLKKQSQDNPIFDVEIQKLEQKLDSLKQHVYSELTPWQRIMICRHPSRPHAVDFIRHLSESFVELAGDRSYREDHAIVGGLAKIGGIKCVVIGQEKGFDTESRVYRNFGMLNPEGFRKALRLMQMAEKFQLPIISLLDTPGAYPGLEAEERGQGWAIARNLREMMRINTPIIITIIGEGCSGGALGMGIGDVIGMLEHAYYSVISPEGCASILWKDASKNVEAASALKLNAEDLLNLKIIDSIIKEPLGGAHHDPHITYQNVKQFLVEQLHILRRIPSQILLEQRYLKFRQMGEFLEG.

Residues Lys-36 to Ile-290 enclose the CoA carboxyltransferase C-terminal domain.

The protein belongs to the AccA family. Acetyl-CoA carboxylase is a heterohexamer composed of biotin carboxyl carrier protein (AccB), biotin carboxylase (AccC) and two subunits each of ACCase subunit alpha (AccA) and ACCase subunit beta (AccD).

Its subcellular location is the cytoplasm. It catalyses the reaction N(6)-carboxybiotinyl-L-lysyl-[protein] + acetyl-CoA = N(6)-biotinyl-L-lysyl-[protein] + malonyl-CoA. Its pathway is lipid metabolism; malonyl-CoA biosynthesis; malonyl-CoA from acetyl-CoA: step 1/1. Functionally, component of the acetyl coenzyme A carboxylase (ACC) complex. First, biotin carboxylase catalyzes the carboxylation of biotin on its carrier protein (BCCP) and then the CO(2) group is transferred by the carboxyltransferase to acetyl-CoA to form malonyl-CoA. In Protochlamydia amoebophila (strain UWE25), this protein is Acetyl-coenzyme A carboxylase carboxyl transferase subunit alpha.